Reading from the N-terminus, the 301-residue chain is MKIAVLSRNPRLYSTRRLVEAGTQRGHEMVVIDTLRAYMNIASHKPQIHYRGKPLEGFDAVIPRIGASVTFYGCAVLRQFEMMGVYPLNESVAIARSRDKLRSLQLLSRRGIGLPITGFAHSPDDIPDLIQMVNGAPLVIKVLEGTQGIGVVLCETTQAAESVIEAFMGLKQNIMVQEYIKEAGGADIRCFVVGDKVIASMKRQAKPGEFRSNLHRGGVASLIKITPEERITAIRAAKVMGLSVAGVDILRSNHGPLVMEVNSSPGLEGIEVTTGKNVAGMIIEHLEKNGGPNQTRTKGKG.

Residues 104–287 (LQLLSRRGIG…VAGMIIEHLE (184 aa)) form the ATP-grasp domain. Residues Lys141, 178-179 (EY), Asp187, and 211-213 (RSN) contribute to the ATP site. Asp248, Glu260, and Asn262 together coordinate Mg(2+). Mn(2+) contacts are provided by Asp248, Glu260, and Asn262.

Belongs to the RimK family. Mg(2+) serves as cofactor. Requires Mn(2+) as cofactor.

This is Probable alpha-L-glutamate ligase from Pseudomonas putida (strain W619).